The primary structure comprises 476 residues: ATP synthase subunit beta 2 (476 aa).

Residue 160–167 (GGAGVGKT) coordinates ATP.

The protein belongs to the ATPase alpha/beta chains family. As to quaternary structure, F-type ATPases have 2 components, CF(1) - the catalytic core - and CF(0) - the membrane proton channel. CF(1) has five subunits: alpha(3), beta(3), gamma(1), delta(1), epsilon(1). CF(0) has four main subunits: a(1), b(1), b'(1) and c(9-12).

The protein resides in the cell inner membrane. The catalysed reaction is ATP + H2O + 4 H(+)(in) = ADP + phosphate + 5 H(+)(out). Functionally, produces ATP from ADP in the presence of a proton gradient across the membrane. The catalytic sites are hosted primarily by the beta subunits. This is ATP synthase subunit beta 2 from Bradyrhizobium sp. (strain BTAi1 / ATCC BAA-1182).